A 387-amino-acid polypeptide reads, in one-letter code: Phosphoglycerate kinase (387 aa).

Residues 21–23 (DLN), Arg-36, 59–62 (HLGR), Arg-113, and Arg-146 contribute to the substrate site. ATP contacts are provided by residues Lys-197, Glu-314, and 340–343 (GGDT).

This sequence belongs to the phosphoglycerate kinase family. As to quaternary structure, monomer.

It localises to the cytoplasm. The catalysed reaction is (2R)-3-phosphoglycerate + ATP = (2R)-3-phospho-glyceroyl phosphate + ADP. It participates in carbohydrate degradation; glycolysis; pyruvate from D-glyceraldehyde 3-phosphate: step 2/5. This chain is Phosphoglycerate kinase, found in Aliivibrio fischeri (strain ATCC 700601 / ES114) (Vibrio fischeri).